The chain runs to 401 residues: Haptoglobin (401 aa).

The N-terminal stretch at 1–18 is a signal peptide; it reads MSALQAVVTLLLCGQLLA. Sushi domains follow at residues 28–83 and 85–142; these read DSCP…ECEE and DSCP…ECEA. 3 disulfide bridges follow: cysteine 49-cysteine 81, cysteine 106-cysteine 140, and cysteine 144-cysteine 261. One can recognise a Peptidase S1 domain in the interval 157-399; it reads IIGGSLDAKG…ILDWVRKTIA (243 aa). Asparagine 286 and asparagine 316 each carry an N-linked (GlcNAc...) asparagine glycan. Cystine bridges form between cysteine 304-cysteine 335 and cysteine 346-cysteine 376. The interval 313–318 is interaction with CD163; that stretch reads APKNKT.

Belongs to the peptidase S1 family. Tetramer of two alpha and two beta chains; disulfide-linked. The hemoglobin/haptoglobin complex is composed of a haptoglobin dimer bound to two hemoglobin alpha-beta dimers. Interacts with CD163. Interacts with ERGIC3. As to expression, expressed by the liver and secreted in plasma.

It is found in the secreted. The protein resides in the extracellular space. In terms of biological role, as a result of hemolysis, hemoglobin is found to accumulate in the kidney and is secreted in the urine. Haptoglobin captures, and combines with free plasma hemoglobin to allow hepatic recycling of heme iron and to prevent kidney damage. Haptoglobin also acts as an antioxidant, has antibacterial activity and plays a role in modulating many aspects of the acute phase response. Hemoglobin/haptoglobin complexes are rapidly cleared by the macrophage CD163 scavenger receptor expressed on the surface of liver Kupfer cells through an endocytic lysosomal degradation pathway. The polypeptide is Haptoglobin (HP) (Bos taurus (Bovine)).